The primary structure comprises 339 residues: DNA-directed RNA polymerase subunit alpha (339 aa).

The alpha N-terminal domain (alpha-NTD) stretch occupies residues 1-233 (MVREEVAGST…DLFLPFLHAE (233 aa)). Positions 264 to 339 (KKGIPLNSIF…IDLLKNKLSF (76 aa)) are alpha C-terminal domain (alpha-CTD).

The protein belongs to the RNA polymerase alpha chain family. As to quaternary structure, in plastids the minimal PEP RNA polymerase catalytic core is composed of four subunits: alpha, beta, beta', and beta''. When a (nuclear-encoded) sigma factor is associated with the core the holoenzyme is formed, which can initiate transcription.

It localises to the plastid. The protein resides in the chloroplast. The enzyme catalyses RNA(n) + a ribonucleoside 5'-triphosphate = RNA(n+1) + diphosphate. In terms of biological role, DNA-dependent RNA polymerase catalyzes the transcription of DNA into RNA using the four ribonucleoside triphosphates as substrates. The protein is DNA-directed RNA polymerase subunit alpha of Aegilops tauschii (Tausch's goatgrass).